The chain runs to 292 residues: Acetyl-coenzyme A carboxylase carboxyl transferase subunit beta (292 aa).

One can recognise a CoA carboxyltransferase N-terminal domain in the interval 23–292; the sequence is VWSKCTACGN…TEATEVSVNE (270 aa). Residues Cys27, Cys30, Cys46, and Cys49 each coordinate Zn(2+). The segment at 27-49 adopts a C4-type zinc-finger fold; the sequence is CTACGNIIYKADLERSLNVCPKC.

Belongs to the AccD/PCCB family. Acetyl-CoA carboxylase is a heterohexamer composed of biotin carboxyl carrier protein (AccB), biotin carboxylase (AccC) and two subunits each of ACCase subunit alpha (AccA) and ACCase subunit beta (AccD). Zn(2+) serves as cofactor.

It is found in the cytoplasm. The enzyme catalyses N(6)-carboxybiotinyl-L-lysyl-[protein] + acetyl-CoA = N(6)-biotinyl-L-lysyl-[protein] + malonyl-CoA. Its pathway is lipid metabolism; malonyl-CoA biosynthesis; malonyl-CoA from acetyl-CoA: step 1/1. In terms of biological role, component of the acetyl coenzyme A carboxylase (ACC) complex. Biotin carboxylase (BC) catalyzes the carboxylation of biotin on its carrier protein (BCCP) and then the CO(2) group is transferred by the transcarboxylase to acetyl-CoA to form malonyl-CoA. In Idiomarina loihiensis (strain ATCC BAA-735 / DSM 15497 / L2-TR), this protein is Acetyl-coenzyme A carboxylase carboxyl transferase subunit beta.